A 279-amino-acid polypeptide reads, in one-letter code: Ankyrin repeat domain-containing protein 7 (279 aa).

Over residues 1–11 the composition is skewed to basic residues; sequence MKKFFPFRGKR. Residues 1–25 are disordered; sequence MKKFFPFRGKRKTDDSHSHSSEVPI. 5 ANK repeats span residues 80 to 109, 113 to 142, 146 to 175, 179 to 208, and 212 to 241; these read RSRTPLHLACANGYTNIVSLLIENQCKINV, ENRTPLIKAVECQQESCATVLLLHGADPNL, YSNTALHYAVCGQNISLANKLLQYKANLEA, DGHTPLLLAVAENNENMVKFLLKKGADVNA, and NHRTAIMIALIVEPTSSVKLLLQQDTDLAH.

The protein is Ankyrin repeat domain-containing protein 7 (Ankrd7) of Mus musculus (Mouse).